Reading from the N-terminus, the 938-residue chain is MSDYKSTLNLPETGFPMRGDLAKREPGMLARWTDDDLYGIIRAAKKGKKTFILHDGPPYANGSIHIGHSVNKILKDIIVKSKGLAGFDSPYVPGWDCHGLPIELKVEQEYGKPGEKFTAAEFRAKCREYAATQVDGQRKDFIRLGVLGDWSHPYLTMDFKTEANIIRALGKIIGNGHLHKGAKPVHWCVDCRSALAEAEVEYYDKTSPSIDVAFHAADQDAVKAKFGVSSVNGPISLVIWTTTPWTLPANRAISLAPDFDYALVQIDGQALILAKDLVESVMQRLGAADYTILGTVKGAELELLRFTHPFMDFDVPAILGDHVTLDAGTGAVHTAPGHGPDDYVIGQKYGLETANPVGPDGAYLPGTYPTLDGVNVFKANDIVVALLREKGALLHVEKLQHSYPCCWRHKTPIIFRATPQWFVSMDQKGLREQSLKEIKGVQWIPDWGQARIESMVANRPDWCISRQRTWGVPMSLFVHKDTEELHPRAIELMEEVAKRVEVDGIQAWWDLDPKEILGDDADQYVKVPDTLDVWFDSGSTHASVVDVRPEFAGHAADMYLEGSDQHRGWFMSSLMISTAMKGKAPYRQVLTHGFTVDGQGRKMSKSIGNTVSPQDVMNKLGADILRLWVASTDYTGEMAVSDEILKRAADSYRRIRNTARFLLANLNGFDPVKDMVKPEEMVVLDRWAVGCAKAAQDDILKAYEAYDFHEVVQRLMRFCSVEMGSFYLDIIKDRQYTAKADSVARRSCQSALYHIAEALVRWMAPIMSFTADEIWGYLPGDREKYVFTGEWYEGLFGLGETEAMNDAYWDELLKVRGEVNKVIEQARADKKVGGSLEAAVTLYAEPELAAKLTALGDELRFVLLTSGAKVADYAEASADAQQSELLKGLKVALSKAEGEKCPRCWHYTTDVGKVAEHAEICGRCVSNIAGDGEKRKFA.

Positions 58-68 match the 'HIGH' region motif; the sequence is PYANGSIHIGH. Residue E561 participates in L-isoleucyl-5'-AMP binding. Positions 602-606 match the 'KMSKS' region motif; it reads KMSKS. K605 provides a ligand contact to ATP. 4 residues coordinate Zn(2+): C901, C904, C921, and C924.

It belongs to the class-I aminoacyl-tRNA synthetase family. IleS type 1 subfamily. As to quaternary structure, monomer. Zn(2+) serves as cofactor.

The protein resides in the cytoplasm. The catalysed reaction is tRNA(Ile) + L-isoleucine + ATP = L-isoleucyl-tRNA(Ile) + AMP + diphosphate. In terms of biological role, catalyzes the attachment of isoleucine to tRNA(Ile). As IleRS can inadvertently accommodate and process structurally similar amino acids such as valine, to avoid such errors it has two additional distinct tRNA(Ile)-dependent editing activities. One activity is designated as 'pretransfer' editing and involves the hydrolysis of activated Val-AMP. The other activity is designated 'posttransfer' editing and involves deacylation of mischarged Val-tRNA(Ile). The chain is Isoleucine--tRNA ligase from Citrobacter koseri (strain ATCC BAA-895 / CDC 4225-83 / SGSC4696).